Consider the following 176-residue polypeptide: ATP-dependent protease subunit HslV (176 aa).

Threonine 2 is a catalytic residue. The Na(+) site is built by glycine 157, cysteine 160, and threonine 163.

This sequence belongs to the peptidase T1B family. HslV subfamily. In terms of assembly, a double ring-shaped homohexamer of HslV is capped on each side by a ring-shaped HslU homohexamer. The assembly of the HslU/HslV complex is dependent on binding of ATP.

The protein resides in the cytoplasm. The catalysed reaction is ATP-dependent cleavage of peptide bonds with broad specificity.. With respect to regulation, allosterically activated by HslU binding. Functionally, protease subunit of a proteasome-like degradation complex believed to be a general protein degrading machinery. This chain is ATP-dependent protease subunit HslV, found in Salmonella gallinarum (strain 287/91 / NCTC 13346).